A 276-amino-acid polypeptide reads, in one-letter code: Phosphatidylglycerol--prolipoprotein diacylglyceryl transferase (276 aa).

7 consecutive transmembrane segments (helical) span residues 17 to 37 (LAIR…LWFG), 59 to 79 (MLFF…VLFY), 95 to 115 (WEGG…MWLF), 129 to 149 (FIAP…FING), 176 to 196 (SQLY…WLFA), 202 to 222 (MGAV…AAEF), and 237 to 257 (LSMG…MVVW). R142 contacts a 1,2-diacyl-sn-glycero-3-phospho-(1'-sn-glycerol).

The protein belongs to the Lgt family.

The protein localises to the cell inner membrane. The enzyme catalyses L-cysteinyl-[prolipoprotein] + a 1,2-diacyl-sn-glycero-3-phospho-(1'-sn-glycerol) = an S-1,2-diacyl-sn-glyceryl-L-cysteinyl-[prolipoprotein] + sn-glycerol 1-phosphate + H(+). It participates in protein modification; lipoprotein biosynthesis (diacylglyceryl transfer). Its function is as follows. Catalyzes the transfer of the diacylglyceryl group from phosphatidylglycerol to the sulfhydryl group of the N-terminal cysteine of a prolipoprotein, the first step in the formation of mature lipoproteins. In Cupriavidus pinatubonensis (strain JMP 134 / LMG 1197) (Cupriavidus necator (strain JMP 134)), this protein is Phosphatidylglycerol--prolipoprotein diacylglyceryl transferase.